The chain runs to 293 residues: Cell division protein FtsQ (293 aa).

Topologically, residues 1–27 (MRPLMRNRASERGVDPAPSRWAWRMQR) are cytoplasmic. The chain crosses the membrane as a helical span at residues 28–48 (LLLTPAFLLFLRAGVPVLVLF). The Periplasmic portion of the chain corresponds to 49-293 (GAATWWLSDT…WWEIRQVSRQ (245 aa)). The POTRA domain occupies 81-149 (FMVQLMAVDG…GVLHIDVEPR (69 aa)).

The protein belongs to the FtsQ/DivIB family. FtsQ subfamily.

It localises to the cell inner membrane. In terms of biological role, essential cell division protein. This chain is Cell division protein FtsQ, found in Roseobacter litoralis (strain ATCC 49566 / DSM 6996 / JCM 21268 / NBRC 15278 / OCh 149).